We begin with the raw amino-acid sequence, 359 residues long: Serpentine receptor class epsilon-26 (359 aa).

The next 7 membrane-spanning stretches (helical) occupy residues C29 to S49, I66 to L86, V127 to V147, F172 to L192, Y195 to I215, L256 to L276, and F282 to V302.

The protein belongs to the nematode receptor-like protein sre family.

It is found in the membrane. In Caenorhabditis elegans, this protein is Serpentine receptor class epsilon-26 (sre-26).